The sequence spans 424 residues: MIIMDLGTTKYIIYAELIADGYVEKHDVIGAIFGQTEGLLGDELDLRELQKTGRVGRIDVELTNINGKSIAKITVPSSLDRIETSILAATLETIDRVGPCVATVKVIDIEDIRKKKREYIVERAKEILKQLMSNIDVNTIIEEVKESVRMGEIIEYGPERLPAGPAVDSSDDIIVVEGRADVLNLLRCGIKNVIAVEGTSVPKTIIELSKKKIVTVFTDGDRGGELILKELLQVCDVDFVARAPPGKEVEELSKKEIMKCLRSKIPAEHILAQILKDKQKIDEKVCKDEIRNMGIQTIPEIKPEISITSNDDVEVSSVECNPSNNEELPPKYNKYRKFYEKLIELEDSKVLIINGDKEEIVSIEELINNTDNYKSIDAIIINGTVTQKLIDILYEKTNLIFCKDAKIIKKPVNLTLITFGDLNA.

Positions aspartate 171–proline 245 constitute a Toprim domain. The Mg(2+) site is built by glutamate 177, aspartate 219, and aspartate 221.

Belongs to the archaeal DnaG primase family. In terms of assembly, forms a ternary complex with MCM helicase and DNA. Requires Mg(2+) as cofactor.

It carries out the reaction ssDNA + n NTP = ssDNA/pppN(pN)n-1 hybrid + (n-1) diphosphate.. Its function is as follows. RNA polymerase that catalyzes the synthesis of short RNA molecules used as primers for DNA polymerase during DNA replication. This chain is DNA primase DnaG, found in Methanocaldococcus jannaschii (strain ATCC 43067 / DSM 2661 / JAL-1 / JCM 10045 / NBRC 100440) (Methanococcus jannaschii).